Reading from the N-terminus, the 546-residue chain is Chaperonin GroEL 5 (546 aa).

ATP is bound by residues 30–33 (TLGP), Lys51, 87–91 (DGTTT), Gly415, and Asp495.

This sequence belongs to the chaperonin (HSP60) family. As to quaternary structure, forms a cylinder of 14 subunits composed of two heptameric rings stacked back-to-back. Interacts with the co-chaperonin GroES.

It localises to the cytoplasm. It carries out the reaction ATP + H2O + a folded polypeptide = ADP + phosphate + an unfolded polypeptide.. Its function is as follows. Together with its co-chaperonin GroES, plays an essential role in assisting protein folding. The GroEL-GroES system forms a nano-cage that allows encapsulation of the non-native substrate proteins and provides a physical environment optimized to promote and accelerate protein folding. The chain is Chaperonin GroEL 5 from Paraburkholderia xenovorans (strain LB400).